The following is a 307-amino-acid chain: Ribonuclease Z (307 aa).

Zn(2+)-binding residues include His63, His65, Asp67, His68, His141, Asp212, and His270. The active-site Proton acceptor is the Asp67.

It belongs to the RNase Z family. Homodimer. Zn(2+) serves as cofactor.

The catalysed reaction is Endonucleolytic cleavage of RNA, removing extra 3' nucleotides from tRNA precursor, generating 3' termini of tRNAs. A 3'-hydroxy group is left at the tRNA terminus and a 5'-phosphoryl group is left at the trailer molecule.. Its function is as follows. Zinc phosphodiesterase, which displays some tRNA 3'-processing endonuclease activity. Probably involved in tRNA maturation, by removing a 3'-trailer from precursor tRNA. The protein is Ribonuclease Z of Bacillus mycoides (strain KBAB4) (Bacillus weihenstephanensis).